Reading from the N-terminus, the 170-residue chain is Fluoride-specific ion channel FluC 2 (170 aa).

Transmembrane regions (helical) follow at residues 8–28 (ALVF…TVWI), 55–75 (IALL…VGMI), 84–104 (TFWG…AAAV), and 114–134 (ILIG…AAAM). Positions 92 and 95 each coordinate Na(+).

The protein belongs to the fluoride channel Fluc/FEX (TC 1.A.43) family.

The protein resides in the cell membrane. It carries out the reaction fluoride(in) = fluoride(out). Na(+) is not transported, but it plays an essential structural role and its presence is essential for fluoride channel function. Functionally, fluoride-specific ion channel. Important for reducing fluoride concentration in the cell, thus reducing its toxicity. This Corynebacterium jeikeium (strain K411) protein is Fluoride-specific ion channel FluC 2.